The sequence spans 878 residues: Alanine--tRNA ligase (878 aa).

The Zn(2+) site is built by His-567, His-571, Cys-669, and His-673.

Belongs to the class-II aminoacyl-tRNA synthetase family. Zn(2+) serves as cofactor.

It is found in the cytoplasm. It catalyses the reaction tRNA(Ala) + L-alanine + ATP = L-alanyl-tRNA(Ala) + AMP + diphosphate. Catalyzes the attachment of alanine to tRNA(Ala) in a two-step reaction: alanine is first activated by ATP to form Ala-AMP and then transferred to the acceptor end of tRNA(Ala). Also edits incorrectly charged Ser-tRNA(Ala) and Gly-tRNA(Ala) via its editing domain. This chain is Alanine--tRNA ligase, found in Rickettsia canadensis (strain McKiel).